A 462-amino-acid polypeptide reads, in one-letter code: Argininosuccinate lyase (462 aa).

The protein belongs to the lyase 1 family. Argininosuccinate lyase subfamily.

It localises to the cytoplasm. It carries out the reaction 2-(N(omega)-L-arginino)succinate = fumarate + L-arginine. It functions in the pathway amino-acid biosynthesis; L-arginine biosynthesis; L-arginine from L-ornithine and carbamoyl phosphate: step 3/3. This chain is Argininosuccinate lyase, found in Prochlorococcus marinus (strain MIT 9211).